We begin with the raw amino-acid sequence, 417 residues long: Gamma-glutamyl phosphate reductase (417 aa).

Belongs to the gamma-glutamyl phosphate reductase family.

It is found in the cytoplasm. The enzyme catalyses L-glutamate 5-semialdehyde + phosphate + NADP(+) = L-glutamyl 5-phosphate + NADPH + H(+). It participates in amino-acid biosynthesis; L-proline biosynthesis; L-glutamate 5-semialdehyde from L-glutamate: step 2/2. In terms of biological role, catalyzes the NADPH-dependent reduction of L-glutamate 5-phosphate into L-glutamate 5-semialdehyde and phosphate. The product spontaneously undergoes cyclization to form 1-pyrroline-5-carboxylate. The protein is Gamma-glutamyl phosphate reductase of Legionella pneumophila (strain Lens).